The primary structure comprises 180 residues: Pro-glucagon (180 aa).

Residues 1-20 (MKTIYFVAGLLIMLVQGSWQ) form the signal peptide. Residues 25-58 (DTEENPRSFPASQTEAHEDPDEMNEDKRHSQGTF) form a disordered region. Serine 54 is modified (phosphoserine). Positions 84-89 (NRNNIA) are excised as a propeptide. 2 positions are modified to phosphoserine: serine 105 and serine 108. Arginine 127 carries the arginine amide modification. A propeptide spanning residues 131-145 (DFPEEVAIAEELGRR) is cleaved from the precursor. A phosphoserine mark is found at serine 150 and serine 152.

Belongs to the glucagon family. In terms of processing, proglucagon is post-translationally processed in a tissue-specific manner in pancreatic A cells and intestinal L cells. In pancreatic A cells, the major bioactive hormone is glucagon cleaved by PCSK2/PC2. In the intestinal L cells PCSK1/PC1 liberates GLP-1, GLP-2, glicentin and oxyntomodulin. GLP-1 is further N-terminally truncated by post-translational processing in the intestinal L cells resulting in GLP-1(7-37) GLP-1-(7-36)amide. The C-terminal amidation is neither important for the metabolism of GLP-1 nor for its effects on the endocrine pancreas. In terms of tissue distribution, secreted in the A cells of the islets of Langerhans. As to expression, secreted in the A cells of the islets of Langerhans. Secreted from enteroendocrine L cells throughout the gastrointestinal tract. Also secreted in selected neurons in the brain. Secreted from enteroendocrine cells throughout the gastrointestinal tract. Also secreted in selected neurons in the brain. In terms of tissue distribution, secreted from enteroendocrine cells throughout the gastrointestinal tract.

It is found in the secreted. Functionally, plays a key role in glucose metabolism and homeostasis. Regulates blood glucose by increasing gluconeogenesis and decreasing glycolysis. A counterregulatory hormone of insulin, raises plasma glucose levels in response to insulin-induced hypoglycemia. Plays an important role in initiating and maintaining hyperglycemic conditions in diabetes. Potent stimulator of glucose-dependent insulin release. Also stimulates insulin release in response to IL6. Plays important roles on gastric motility and the suppression of plasma glucagon levels. May be involved in the suppression of satiety and stimulation of glucose disposal in peripheral tissues, independent of the actions of insulin. Has growth-promoting activities on intestinal epithelium. May also regulate the hypothalamic pituitary axis (HPA) via effects on LH, TSH, CRH, oxytocin, and vasopressin secretion. Increases islet mass through stimulation of islet neogenesis and pancreatic beta cell proliferation. Inhibits beta cell apoptosis. In terms of biological role, stimulates intestinal growth and up-regulates villus height in the small intestine, concomitant with increased crypt cell proliferation and decreased enterocyte apoptosis. The gastrointestinal tract, from the stomach to the colon is the principal target for GLP-2 action. Plays a key role in nutrient homeostasis, enhancing nutrient assimilation through enhanced gastrointestinal function, as well as increasing nutrient disposal. Stimulates intestinal glucose transport and decreases mucosal permeability. Its function is as follows. Significantly reduces food intake. Inhibits gastric emptying in humans. Suppression of gastric emptying may lead to increased gastric distension, which may contribute to satiety by causing a sensation of fullness. Functionally, may modulate gastric acid secretion and the gastro-pyloro-duodenal activity. May play an important role in intestinal mucosal growth in the early period of life. The polypeptide is Pro-glucagon (Gcg) (Mus musculus (Mouse)).